The chain runs to 227 residues: Orotidine 5'-phosphate decarboxylase (227 aa).

Residues Asp-8, Lys-30, 59–68 (DLKLYDIPYT), Thr-118, Arg-178, Gln-187, Gly-207, and Arg-208 each bind substrate. The Proton donor role is filled by Lys-61.

Belongs to the OMP decarboxylase family. Type 1 subfamily. In terms of assembly, homodimer.

It carries out the reaction orotidine 5'-phosphate + H(+) = UMP + CO2. The protein operates within pyrimidine metabolism; UMP biosynthesis via de novo pathway; UMP from orotate: step 2/2. Catalyzes the decarboxylation of orotidine 5'-monophosphate (OMP) to uridine 5'-monophosphate (UMP). This Helicobacter pylori (strain Shi470) protein is Orotidine 5'-phosphate decarboxylase.